The primary structure comprises 178 residues: Deoxycytidylate deaminase (178 aa).

In terms of domain architecture, CMP/dCMP-type deaminase spans 14–146 (EWPEYFMAVA…EATAARLLFD (133 aa)). Residue histidine 84 participates in Zn(2+) binding. Glutamate 86 (proton donor) is an active-site residue. Positions 110 and 113 each coordinate Zn(2+). At serine 174 the chain carries Phosphoserine.

The protein belongs to the cytidine and deoxycytidylate deaminase family. In terms of assembly, homohexamer. Requires Zn(2+) as cofactor.

It carries out the reaction dCMP + H2O + H(+) = dUMP + NH4(+). It catalyses the reaction 5-hydroxymethyl-dCMP + H2O + H(+) = 5-hydroxymethyl-dUMP + NH4(+). Allosteric enzyme whose activity is greatly influenced by the end products of its metabolic pathway, dCTP and dTTP. Catalyzes the deamination of dCMP to dUMP, providing the nucleoside monophosphate substrate for the thymidylate synthase/TYMS. Also, part of a nucleotide salvage pathway that eliminates epigenetically modified 5-hydroxymethyl-dCMP (hmdCMP) in a two-step process entailing deamination to cytotoxic 5-hydroxymethyl-dUMP (hmdUMP), followed by its hydrolysis into 5-hydroxymethyluracil (hmU) and 2-deoxy-D-ribose 5-phosphate (deoxyribosephosphate). Catalyzes the first step in that pathway, the deamination of 5-hydroxymethyl-dCMP (hmdCMP). The polypeptide is Deoxycytidylate deaminase (Pongo abelii (Sumatran orangutan)).